We begin with the raw amino-acid sequence, 295 residues long: MSVKHFIQITKPGIIFGNVLSVAGGFFLASKGHVDFALFLAVVIGTSLVVASGCVFNNCIDRDIDHKMERTKNRVMVQGGMSLTLALAYATLLGVAGFSLLYVQANPLAAFCALVGFVVYVGFYSLWLKRKSVHGTLVGSLSGAMPPVIGYCAVSNSFDLAAVTLLVMFSLWQMPHSFAIAIFRFKDYSAANIPVLPVARGILAAKKQIVLYVLAFVLATVMLTLGGYAGLGYLAVAAAMGLYWLYMAWGGYKAEDDSKWARKVFGFSILTVTALSVMMSVDSQTAADVLMTYAR.

Helical transmembrane passes span 9–29 (ITKPGIIFGNVLSVAGGFFLA), 36–56 (FALFLAVVIGTSLVVASGCVF), 83–103 (LTLALAYATLLGVAGFSLLYV), 108–128 (LAAFCALVGFVVYVGFYSLWL), 135–155 (GTLVGSLSGAMPPVIGYCAVS), 163–183 (VTLLVMFSLWQMPHSFAIAIF), 209–229 (IVLYVLAFVLATVMLTLGGYA), 230–250 (GLGYLAVAAAMGLYWLYMAWG), and 264–284 (VFGFSILTVTALSVMMSVDSQ).

The protein belongs to the UbiA prenyltransferase family. Protoheme IX farnesyltransferase subfamily.

It localises to the cell inner membrane. The enzyme catalyses heme b + (2E,6E)-farnesyl diphosphate + H2O = Fe(II)-heme o + diphosphate. It participates in porphyrin-containing compound metabolism; heme O biosynthesis; heme O from protoheme: step 1/1. Functionally, converts heme B (protoheme IX) to heme O by substitution of the vinyl group on carbon 2 of heme B porphyrin ring with a hydroxyethyl farnesyl side group. The chain is Protoheme IX farnesyltransferase 2 from Pseudomonas entomophila (strain L48).